The chain runs to 424 residues: Histidine--tRNA ligase (424 aa).

The protein belongs to the class-II aminoacyl-tRNA synthetase family. Homodimer.

Its subcellular location is the cytoplasm. It catalyses the reaction tRNA(His) + L-histidine + ATP = L-histidyl-tRNA(His) + AMP + diphosphate + H(+). The sequence is that of Histidine--tRNA ligase from Salmonella typhi.